Reading from the N-terminus, the 234-residue chain is MEKKDMLYEGKAKKIFRTDDKDTVVVYYKDDATAFNGEKKGTIEDKGVMNNSITAMLFELLEKKGVKTHFIEKINEREQLCKKVEIVPLEVIVRNIAAGSMAKRLGLSEGRKLDTTVFEISYKNDDLNDPLINDYHAVAIGLTTFEELKEMYSIAEKVNNTLKEFFDEQGINLVDFKIEIGRFNGELLLADEISPDTCRLWDKSTGEKLDKDRFRRDMGNVKEAYMEILKRVNK.

It belongs to the SAICAR synthetase family.

It carries out the reaction 5-amino-1-(5-phospho-D-ribosyl)imidazole-4-carboxylate + L-aspartate + ATP = (2S)-2-[5-amino-1-(5-phospho-beta-D-ribosyl)imidazole-4-carboxamido]succinate + ADP + phosphate + 2 H(+). Its pathway is purine metabolism; IMP biosynthesis via de novo pathway; 5-amino-1-(5-phospho-D-ribosyl)imidazole-4-carboxamide from 5-amino-1-(5-phospho-D-ribosyl)imidazole-4-carboxylate: step 1/2. This is Phosphoribosylaminoimidazole-succinocarboxamide synthase from Clostridium botulinum (strain ATCC 19397 / Type A).